The sequence spans 577 residues: Outer spore wall assembly protein SHE10 (577 aa).

Positions 1–23 are cleaved as a signal peptide; it reads MGKLIKLITTLTVLVSLLQYCCE. Coiled coils occupy residues 379-416 and 513-561; these read NETR…ENVE and ILRS…EEDV. Basic and acidic residues predominate over residues 525 to 545; it reads RERKERERKEREKAAAEEFQR. A disordered region spans residues 525–577; the sequence is RERKERERKEREKAAAEEFQRQQELLRQQEEEDEEDVSYTSTSTITTTTTMTL. Positions 562 to 577 are enriched in low complexity; that stretch reads SYTSTSTITTTTTMTL.

Belongs to the SHE10 family. Component of the mitochondria-localized RNase mitochondrial RNA-processing (RNase MRP) composed of one single RNA encoded by the NME1 gene and at least 31 proteins. Absent in the nucleus-localized RNase MRP (NuMRP).

The protein resides in the mitochondrion. Functionally, involved in spore wall assembly. May be a component of the mitochondrial RNase MRP (MtMRP), a ribonucleoprotein endoribonuclease involved in the cleaving RNA transcripts to generate primers for DNA replication in mitochondria. The protein is Outer spore wall assembly protein SHE10 of Saccharomyces cerevisiae (strain Lalvin EC1118 / Prise de mousse) (Baker's yeast).